The sequence spans 327 residues: MEAIKGADVNVPDAVFAWILDRNGGVKPLTDNDVIDSEHPCWLHLNYTHPESAQWLATTPLLPNNVRDALAGESTRPRVNRMGEGTLITLRCINGSTDERPDQLVAMRVYMDERLIVSTRQRKVLALDDVVSDLEEGTGPEDCGGWLVDVCDALTDHASEFIEQLHDKIIDLEDNLLDQQIPPRGFLALLRKQLIVMRRYMAPQRDVYARLSSERLPWMNDDQRRRMQDIADRLGRGLDEIDACIARTGVMADEIAQVMQENLARRTYTMSLMAMVFLPSTFLTGLFGVNLGGIPGGGWRFGFSLFCILLVVLIGGVALWLHRSKWL.

Residues 1-273 (MEAIKGADVN…ARRTYTMSLM (273 aa)) lie on the Cytoplasmic side of the membrane. The helical transmembrane segment at 274-294 (AMVFLPSTFLTGLFGVNLGGI) threads the bilayer. The Periplasmic portion of the chain corresponds to 295-300 (PGGGWR). The chain crosses the membrane as a helical span at residues 301-321 (FGFSLFCILLVVLIGGVALWL). The Cytoplasmic portion of the chain corresponds to 322 to 327 (HRSKWL).

It belongs to the CorA metal ion transporter (MIT) (TC 1.A.35) family.

Its subcellular location is the cell inner membrane. It catalyses the reaction Zn(2+)(out) + H(+)(out) = Zn(2+)(in) + H(+)(in). Zinc transporter. Acts as a Zn(2+):proton symporter, which likely mediates zinc ion uptake. In Escherichia fergusonii (strain ATCC 35469 / DSM 13698 / CCUG 18766 / IAM 14443 / JCM 21226 / LMG 7866 / NBRC 102419 / NCTC 12128 / CDC 0568-73), this protein is Zinc transport protein ZntB.